The chain runs to 254 residues: Imidazole glycerol phosphate synthase subunit HisF (254 aa).

Residues aspartate 12 and aspartate 131 contribute to the active site.

It belongs to the HisA/HisF family. As to quaternary structure, heterodimer of HisH and HisF.

The protein resides in the cytoplasm. The enzyme catalyses 5-[(5-phospho-1-deoxy-D-ribulos-1-ylimino)methylamino]-1-(5-phospho-beta-D-ribosyl)imidazole-4-carboxamide + L-glutamine = D-erythro-1-(imidazol-4-yl)glycerol 3-phosphate + 5-amino-1-(5-phospho-beta-D-ribosyl)imidazole-4-carboxamide + L-glutamate + H(+). It participates in amino-acid biosynthesis; L-histidine biosynthesis; L-histidine from 5-phospho-alpha-D-ribose 1-diphosphate: step 5/9. Functionally, IGPS catalyzes the conversion of PRFAR and glutamine to IGP, AICAR and glutamate. The HisF subunit catalyzes the cyclization activity that produces IGP and AICAR from PRFAR using the ammonia provided by the HisH subunit. The protein is Imidazole glycerol phosphate synthase subunit HisF of Kocuria rhizophila (strain ATCC 9341 / DSM 348 / NBRC 103217 / DC2201).